Consider the following 259-residue polypeptide: Putative protein-tyrosine sulfotransferase (259 aa).

A disulfide bridge connects residues Cys-13 and Cys-68. Glu-16 functions as the Proton donor/acceptor in the catalytic mechanism. An N-linked (GlcNAc...) asparagine glycan is attached at Asn-36. 3'-phosphoadenylyl sulfate contacts are provided by Arg-95, Ser-103, and Arg-107. Asn-115 carries N-linked (GlcNAc...) asparagine glycosylation. Cys-137 and Cys-144 are oxidised to a cystine. 3'-phosphoadenylyl sulfate-binding positions include Tyr-149 and 194–203 (SASQVKNSIN).

This sequence belongs to the protein sulfotransferase family.

It carries out the reaction L-tyrosyl-[protein] + 3'-phosphoadenylyl sulfate = O-sulfo-L-tyrosine-[protein] + adenosine 3',5'-bisphosphate + H(+). Catalyzes the O-sulfation of tyrosine residues within acidic motifs of polypeptides, using 3'-phosphoadenylyl sulfate (PAPS) as cosubstrate. The polypeptide is Putative protein-tyrosine sulfotransferase (tpst-2) (Caenorhabditis elegans).